Here is a 613-residue protein sequence, read N- to C-terminus: Ribosome-associated molecular chaperone SSB1 (613 aa).

A nucleotide binding domain (NBD) region spans residues 1 to 391 (MAEGVFPGAI…ILTGQSTSDE (391 aa)). Residues 16-18 (TTY), lysine 73, 205-207 (GGT), 271-278 (ERAKRTLS), and glycine 342 each bind ATP. The interval 392 to 402 (TKDLLLLDVAP) is inter-domain linker. The segment at 403–613 (LSLGVGMAGD…RAVTKAMSTR (211 aa)) is substrate binding domain (SBD). Positions 516-612 (SEEIEQMVNQ…KRAVTKAMST (97 aa)) are lid domain (SBDalpha). Positions 574 to 582 (VEAALADAF) match the Nuclear export signal motif.

The protein belongs to the heat shock protein 70 family. Ssb-type Hsp70 subfamily. Binds to ribosomes. Binds close to the ribosomal tunnel exit via contacts with both ribosomal proteins and rRNA. Directly interacts with nascent polypeptides. This interaction is dependent on the ribosome-associated complex (RAC). Interacts with SSE1. Interacts with FES1.

It is found in the cytoplasm. The enzyme catalyses ATP + H2O = ADP + phosphate + H(+). Functionally, ribosome-bound, Hsp70-type chaperone that assists in the cotranslational folding of newly synthesized proteins in the cytosol. Stimulates folding by interacting with nascent chains, binding to short, largely hydrophobic sequences exposed by unfolded proteins, thereby stabilizing longer, more slowly translated, and aggregation-prone nascent polypeptides and domains that cannot fold stably until fully synthesized. The Hsp70-protein substrate interaction depends on ATP-binding and on allosteric regulation between the NBD and the SBD. The ATP-bound state is characterized by a fast exchange rate of substrate (low affinity state), while in the ADP-bound state exchange is much slower (high affinity state). During the Hsp70 cycle, the chaperone switches between the ATP-bound state (open conformation) and the ADP-bound state (closed conformation) by major conformational rearrangements involving mainly the lid domain. Ssb cooperates with a specific Hsp40/Hsp70 co-chaperone termed the ribosome-associated complex (RAC), which stimulates the ATPase activity of the ribosome-associated pool of Ssbs and switches it to the high affinity substrate binding state. Hsp110 chaperone SSE1 and FES1 act as nucleotide exchange factors that cause substrate release. The protein is Ribosome-associated molecular chaperone SSB1 (SSB1) of Kluyveromyces marxianus (Yeast).